We begin with the raw amino-acid sequence, 134 residues long: Aspartate 1-decarboxylase (134 aa).

Catalysis depends on S25, which acts as the Schiff-base intermediate with substrate; via pyruvic acid. The residue at position 25 (S25) is a Pyruvic acid (Ser). T57 serves as a coordination point for substrate. Y58 functions as the Proton donor in the catalytic mechanism. 73–75 (GAA) is a binding site for substrate.

This sequence belongs to the PanD family. As to quaternary structure, heterooctamer of four alpha and four beta subunits. It depends on pyruvate as a cofactor. In terms of processing, is synthesized initially as an inactive proenzyme, which is activated by self-cleavage at a specific serine bond to produce a beta-subunit with a hydroxyl group at its C-terminus and an alpha-subunit with a pyruvoyl group at its N-terminus.

It localises to the cytoplasm. The catalysed reaction is L-aspartate + H(+) = beta-alanine + CO2. Its pathway is cofactor biosynthesis; (R)-pantothenate biosynthesis; beta-alanine from L-aspartate: step 1/1. Its function is as follows. Catalyzes the pyruvoyl-dependent decarboxylation of aspartate to produce beta-alanine. The sequence is that of Aspartate 1-decarboxylase from Geobacter sp. (strain M21).